We begin with the raw amino-acid sequence, 204 residues long: Urease accessory protein UreG (204 aa).

A GTP-binding site is contributed by 15-22 (GPVGSGKT).

This sequence belongs to the SIMIBI class G3E GTPase family. UreG subfamily. Homodimer. UreD, UreF and UreG form a complex that acts as a GTP-hydrolysis-dependent molecular chaperone, activating the urease apoprotein by helping to assemble the nickel containing metallocenter of UreC. The UreE protein probably delivers the nickel.

Its subcellular location is the cytoplasm. Facilitates the functional incorporation of the urease nickel metallocenter. This process requires GTP hydrolysis, probably effectuated by UreG. This chain is Urease accessory protein UreG, found in Methylobacterium nodulans (strain LMG 21967 / CNCM I-2342 / ORS 2060).